Consider the following 262-residue polypeptide: Acetaldehyde dehydrogenase 7 (262 aa).

An NAD(+)-binding site is contributed by 10–13; the sequence is SGNI. Cys128 functions as the Acyl-thioester intermediate in the catalytic mechanism. Residue 159–167 participates in NAD(+) binding; that stretch reads SAGPGTRAN.

Belongs to the acetaldehyde dehydrogenase family.

The enzyme catalyses acetaldehyde + NAD(+) + CoA = acetyl-CoA + NADH + H(+). This chain is Acetaldehyde dehydrogenase 7, found in Rhodococcus jostii (strain RHA1).